The chain runs to 166 residues: Regulatory protein RecX (166 aa).

This sequence belongs to the RecX family.

It localises to the cytoplasm. In terms of biological role, modulates RecA activity. The chain is Regulatory protein RecX from Shigella boydii serotype 4 (strain Sb227).